The sequence spans 212 residues: Transcriptional regulator GfcR (212 aa).

It belongs to the purine/pyrimidine phosphoribosyltransferase family. GfcR subfamily.

Functionally, DNA-binding transcriptional regulator that functions as a regulator of central sugar catabolic pathways. The polypeptide is Transcriptional regulator GfcR (Halobacterium salinarum (strain ATCC 29341 / DSM 671 / R1)).